The sequence spans 215 residues: Pyridoxine/pyridoxamine 5'-phosphate oxidase (215 aa).

Substrate is bound by residues 9–12 (RRDY) and Lys-69. FMN contacts are provided by residues 64-69 (RVLLLK), 79-80 (FT), Lys-86, and Gln-108. 3 residues coordinate substrate: Tyr-126, Arg-130, and Ser-134. Residues 143-144 (QS) and Trp-188 each bind FMN. 194–196 (RLH) serves as a coordination point for substrate. Arg-198 provides a ligand contact to FMN.

Belongs to the pyridoxamine 5'-phosphate oxidase family. In terms of assembly, homodimer. FMN is required as a cofactor.

The catalysed reaction is pyridoxamine 5'-phosphate + O2 + H2O = pyridoxal 5'-phosphate + H2O2 + NH4(+). It carries out the reaction pyridoxine 5'-phosphate + O2 = pyridoxal 5'-phosphate + H2O2. The protein operates within cofactor metabolism; pyridoxal 5'-phosphate salvage; pyridoxal 5'-phosphate from pyridoxamine 5'-phosphate: step 1/1. Its pathway is cofactor metabolism; pyridoxal 5'-phosphate salvage; pyridoxal 5'-phosphate from pyridoxine 5'-phosphate: step 1/1. Its function is as follows. Catalyzes the oxidation of either pyridoxine 5'-phosphate (PNP) or pyridoxamine 5'-phosphate (PMP) into pyridoxal 5'-phosphate (PLP). This is Pyridoxine/pyridoxamine 5'-phosphate oxidase from Pseudomonas putida (strain GB-1).